The sequence spans 751 residues: CCR4-NOT transcription complex subunit 3 (751 aa).

Positions 240 to 534 (ATSPPSHSHM…QFSTTPEIKA (295 aa)) are disordered. Residues 257–268 (SSSTPTSTTSSS) are compositionally biased toward low complexity. Basic and acidic residues predominate over residues 284 to 293 (DDKKRGRSTD). Phosphothreonine is present on Thr292. Polar residues predominate over residues 294-315 (SEVSQSPAKNGSKPVHSNQHPQ). Ser299 carries the post-translational modification Phosphoserine. Pro residues predominate over residues 317–330 (PAVPPTYPSGPPPT). The segment covering 339–348 (GNNGASTPAA) has biased composition (polar residues). The span at 441–450 (SSSGGSSASS) shows a compositional bias: low complexity. The span at 463–472 (APSTSKESST) shows a compositional bias: polar residues. The span at 473–498 (AAPSGAGNVASGSGNNSGGPSLLVPL) shows a compositional bias: low complexity. Ser540 is subject to Phosphoserine. The segment at 659 to 751 (EFYQRLSTET…YRYLEDRDLQ (93 aa)) is repressor domain.

Belongs to the CNOT2/3/5 family. Component of the CCR4-NOT complex; distinct complexes seem to exist that differ in the participation of probably mutually exclusive catalytic subunits. In the complex interacts directly with CNOT2. Interacts with TIP120B and NANOS2. Interacts with EBF1. Interacts in an RNA-independent manner with BICC1 (via KH domains).

It localises to the nucleus. It is found in the cytoplasm. The protein resides in the P-body. Its function is as follows. Component of the CCR4-NOT complex which is one of the major cellular mRNA deadenylases and is linked to various cellular processes including bulk mRNA degradation, miRNA-mediated repression, translational repression during translational initiation and general transcription regulation. Additional complex functions may be a consequence of its influence on mRNA expression. May be involved in metabolic regulation; may be involved in recruitment of the CCR4-NOT complex to deadenylation target mRNAs involved in energy metabolism. Involved in mitotic progression and regulation of the spindle assembly checkpoint by regulating the stability of MAD1L1 mRNA. Can repress transcription and may link the CCR4-NOT complex to transcriptional regulation; the repressive function may involve histone deacetylases. Involved in the maintenance of embryonic stem (ES) cell identity; prevents their differentiation towards extraembryonic trophectoderm lineages. The sequence is that of CCR4-NOT transcription complex subunit 3 (Cnot3) from Mus musculus (Mouse).